We begin with the raw amino-acid sequence, 89 residues long: Small ribosomal subunit protein uS15 (89 aa).

The protein belongs to the universal ribosomal protein uS15 family. As to quaternary structure, part of the 30S ribosomal subunit. Forms a bridge to the 50S subunit in the 70S ribosome, contacting the 23S rRNA.

Its function is as follows. One of the primary rRNA binding proteins, it binds directly to 16S rRNA where it helps nucleate assembly of the platform of the 30S subunit by binding and bridging several RNA helices of the 16S rRNA. Forms an intersubunit bridge (bridge B4) with the 23S rRNA of the 50S subunit in the ribosome. The protein is Small ribosomal subunit protein uS15 of Thermodesulfovibrio yellowstonii (strain ATCC 51303 / DSM 11347 / YP87).